The chain runs to 478 residues: MTTTVETATATGRVARVIGPVVDVEFPVDAMPEIYNALHVEVADPAKEGELKTLTLEVAQHLGDGLVRTISMQPTDGLIRQAPVTDTGAAISVPVGDFTKGKVFNTLGEVLNVDEQYTGERWPIHRKAPNFDELESKTEMFETGVKVIDLLTPYVKGGKIGLFGGAGVGKTVLIQEMIYRVANNHDGVSVFAGVGERTREGNDLIDEMSESGVIDKTALVFGQMDEPPGTRLRVALAGLTMAEYFRDVQKQDVLFFIDNIFRFTQAGSEVSTLLGRMPSAVGYQPNLADEMGLLQERITSTRGHSITSMQAIYVPADDLTDPAPATTFAHLDATTVLSRPISEKGIYPAVDPLDSTSRILDPRYIAAEHYNAAMRVKNILQKYKDLQDIIAILGIDELGEEDKLVVHRARRVERFLSQNTHVAKQFTGVDGSDVPLDESIAAFNAICDGEYDHFPEQAFFMCGGIEDLKNNAKELGVS.

164–171 provides a ligand contact to ATP; sequence GGAGVGKT.

This sequence belongs to the ATPase alpha/beta chains family. As to quaternary structure, F-type ATPases have 2 components, CF(1) - the catalytic core - and CF(0) - the membrane proton channel. CF(1) has five subunits: alpha(3), beta(3), gamma(1), delta(1), epsilon(1). CF(0) has three main subunits: a(1), b(2) and c(9-12). The alpha and beta chains form an alternating ring which encloses part of the gamma chain. CF(1) is attached to CF(0) by a central stalk formed by the gamma and epsilon chains, while a peripheral stalk is formed by the delta and b chains.

It is found in the cell membrane. The enzyme catalyses ATP + H2O + 4 H(+)(in) = ADP + phosphate + 5 H(+)(out). Its function is as follows. Produces ATP from ADP in the presence of a proton gradient across the membrane. The catalytic sites are hosted primarily by the beta subunits. In Streptomyces coelicolor (strain ATCC BAA-471 / A3(2) / M145), this protein is ATP synthase subunit beta.